The sequence spans 85 residues: Turripeptide PaIAa (85 aa).

This sequence belongs to the turripeptide family. In terms of tissue distribution, expressed by the venom duct.

The protein resides in the secreted. Functionally, is lethal to drosophila larvae. The protein is Turripeptide PaIAa of Polystira albida (White giant-turris).